The sequence spans 142 residues: Hemoglobin subunit alpha-A (142 aa).

A Globin domain is found at Val2–Arg142. His59 is an O2 binding site. Heme b is bound at residue His88.

This sequence belongs to the globin family. Heterotetramer of two alpha chains and two beta chains. Red blood cells.

Involved in oxygen transport from the lung to the various peripheral tissues. The protein is Hemoglobin subunit alpha-A (HBAA) of Anas platyrhynchos platyrhynchos (Northern mallard).